Here is a 440-residue protein sequence, read N- to C-terminus: Protein CANDIDATE G-PROTEIN COUPLED RECEPTOR 7 (440 aa).

The N-terminal stretch at 1–24 (MAKMPLSVVVFLLFSAAFLAVSMA) is a signal peptide. 2 N-linked (GlcNAc...) asparagine glycosylation sites follow: Asn-124 and Asn-162. The next 5 helical transmembrane spans lie at 175-195 (LPTL…FWSY), 207-227 (IHLL…CAAE), 243-263 (ILFY…IILI), 281-301 (VLII…VIGE), and 315-335 (VFLL…VWSI). A glycan (N-linked (GlcNAc...) asparagine) is linked at Asn-351. 2 helical membrane passes run 363-383 (IVVI…KTIA) and 390-410 (VSFA…FHMF).

It belongs to the LU7TM family.

It is found in the membrane. Plays a role in plants and microbes interactions. G-protein coupled receptor involved in root growth mediated by the bacterial quorum-sensing signals N-acyl-homoserine lactones (AHLs). This is Protein CANDIDATE G-PROTEIN COUPLED RECEPTOR 7 from Arabidopsis thaliana (Mouse-ear cress).